The primary structure comprises 101 residues: NAD(P)H-quinone oxidoreductase subunit 4L, chloroplastic (101 aa).

The next 3 membrane-spanning stretches (helical) occupy residues 2-22 (MFEY…YGLI), 32-52 (MCLE…SDLF), and 61-81 (IFSI…PAIV).

It belongs to the complex I subunit 4L family. NDH is composed of at least 16 different subunits, 5 of which are encoded in the nucleus.

The protein resides in the plastid. The protein localises to the chloroplast thylakoid membrane. The catalysed reaction is a plastoquinone + NADH + (n+1) H(+)(in) = a plastoquinol + NAD(+) + n H(+)(out). It catalyses the reaction a plastoquinone + NADPH + (n+1) H(+)(in) = a plastoquinol + NADP(+) + n H(+)(out). NDH shuttles electrons from NAD(P)H:plastoquinone, via FMN and iron-sulfur (Fe-S) centers, to quinones in the photosynthetic chain and possibly in a chloroplast respiratory chain. The immediate electron acceptor for the enzyme in this species is believed to be plastoquinone. Couples the redox reaction to proton translocation, and thus conserves the redox energy in a proton gradient. This Amborella trichopoda protein is NAD(P)H-quinone oxidoreductase subunit 4L, chloroplastic.